The sequence spans 279 residues: tRNA pseudouridine synthase B (279 aa).

The active-site Nucleophile is the Asp-38.

The protein belongs to the pseudouridine synthase TruB family. Type 1 subfamily.

It catalyses the reaction uridine(55) in tRNA = pseudouridine(55) in tRNA. In terms of biological role, responsible for synthesis of pseudouridine from uracil-55 in the psi GC loop of transfer RNAs. The polypeptide is tRNA pseudouridine synthase B (Acholeplasma laidlawii (strain PG-8A)).